The sequence spans 324 residues: Cytosolic sulfotransferase 13 (324 aa).

76–81 (KSGTTW) is a binding site for 3'-phosphoadenylyl sulfate. Histidine 134 acts as the Proton acceptor in catalysis. Residues arginine 156, serine 164, tyrosine 222, and 288-290 (RKG) each bind 3'-phosphoadenylyl sulfate.

This sequence belongs to the sulfotransferase 1 family.

It is found in the cytoplasm. Functionally, sulfotransferase that utilizes 3'-phospho-5'-adenylyl sulfate (PAPS) as sulfonate donor. This Arabidopsis thaliana (Mouse-ear cress) protein is Cytosolic sulfotransferase 13 (SOT13).